We begin with the raw amino-acid sequence, 332 residues long: MKVAVLGAGAWGTALAGHLAARHDTLLWARDAALIAGLQARHENSRYLDGIALPDALRYDADLGVALAHGAADDALCVIAAPVAGLRTLCHAMRDAGCVPAHIVWVCKGFEADTHLLPHQVIAAELPGQQSNGVLSGPSFAREVGQSLPVALTVASTSAGCRERTLAAFHHGAMRIYTGDDVVGVEVGGAVKNVLAIATGISDGLGLGLNARAALITRGLAEMSRLGVALGGRAETFTGLTGLGDLILTATGDLSRNRTVGLQLAAGRTLNDILGALGHVAEGVRCAQAVLALARAQSIEMPIAEAVCGVLFDGIAPRDAVSGLLRRDARAE.

Residues Trp-11, Arg-30, and Lys-108 each coordinate NADPH. 3 residues coordinate sn-glycerol 3-phosphate: Lys-108, Gly-137, and Ser-139. Residue Ala-141 coordinates NADPH. Positions 192, 245, 255, 256, and 257 each coordinate sn-glycerol 3-phosphate. Lys-192 functions as the Proton acceptor in the catalytic mechanism. Arg-256 contributes to the NADPH binding site. NADPH contacts are provided by Val-280 and Glu-282.

Belongs to the NAD-dependent glycerol-3-phosphate dehydrogenase family.

The protein localises to the cytoplasm. It catalyses the reaction sn-glycerol 3-phosphate + NAD(+) = dihydroxyacetone phosphate + NADH + H(+). The catalysed reaction is sn-glycerol 3-phosphate + NADP(+) = dihydroxyacetone phosphate + NADPH + H(+). Its pathway is membrane lipid metabolism; glycerophospholipid metabolism. Its function is as follows. Catalyzes the reduction of the glycolytic intermediate dihydroxyacetone phosphate (DHAP) to sn-glycerol 3-phosphate (G3P), the key precursor for phospholipid synthesis. This is Glycerol-3-phosphate dehydrogenase [NAD(P)+] from Burkholderia cenocepacia (strain ATCC BAA-245 / DSM 16553 / LMG 16656 / NCTC 13227 / J2315 / CF5610) (Burkholderia cepacia (strain J2315)).